A 146-amino-acid polypeptide reads, in one-letter code: 3-dehydroquinate dehydratase (146 aa).

The Proton acceptor role is filled by tyrosine 22. Substrate is bound by residues asparagine 73, histidine 79, and aspartate 86. The Proton donor role is filled by histidine 101. Residues isoleucine 102–serine 103 and arginine 112 each bind substrate.

It belongs to the type-II 3-dehydroquinase family. Homododecamer.

The catalysed reaction is 3-dehydroquinate = 3-dehydroshikimate + H2O. The protein operates within metabolic intermediate biosynthesis; chorismate biosynthesis; chorismate from D-erythrose 4-phosphate and phosphoenolpyruvate: step 3/7. In terms of biological role, catalyzes a trans-dehydration via an enolate intermediate. This is 3-dehydroquinate dehydratase (aroQ) from Corynebacterium pseudotuberculosis (strain C231).